We begin with the raw amino-acid sequence, 426 residues long: AP-1 complex subunit mu-1 (426 aa).

The region spanning 167–425 is the MHD domain; that stretch reads KNEVFLDVIE…TQNGTEYSIR (259 aa).

The protein belongs to the adaptor complexes medium subunit family. As to quaternary structure, adaptor protein complex 1 (AP-1) is a heterotetramer composed of two large adaptins (gamma-type subunit apl4 and beta-type subunit apl2), a medium adaptin (mu-type subunit apm1) and a small adaptin (sigma-type subunit aps1). AP-1 interacts with clathrin. Interacts with sad1.

It is found in the cytoplasmic vesicle. Its subcellular location is the clathrin-coated vesicle membrane. The protein localises to the membrane. It localises to the clathrin-coated pit. Its function is as follows. Component of the adaptor complexes which link clathrin to receptors in coated vesicles. Clathrin-associated protein complexes are believed to interact with the cytoplasmic tails of membrane proteins, leading to their selection and concentration. The sequence is that of AP-1 complex subunit mu-1 (apm1) from Schizosaccharomyces pombe (strain 972 / ATCC 24843) (Fission yeast).